We begin with the raw amino-acid sequence, 294 residues long: Acetylglutamate kinase (294 aa).

Substrate-binding positions include 60 to 61 (GG), arginine 82, and asparagine 186.

It belongs to the acetylglutamate kinase family. ArgB subfamily.

Its subcellular location is the cytoplasm. The catalysed reaction is N-acetyl-L-glutamate + ATP = N-acetyl-L-glutamyl 5-phosphate + ADP. The protein operates within amino-acid biosynthesis; L-arginine biosynthesis; N(2)-acetyl-L-ornithine from L-glutamate: step 2/4. Its function is as follows. Catalyzes the ATP-dependent phosphorylation of N-acetyl-L-glutamate. The polypeptide is Acetylglutamate kinase (Methanospirillum hungatei JF-1 (strain ATCC 27890 / DSM 864 / NBRC 100397 / JF-1)).